The primary structure comprises 344 residues: MMNMLSDRKKLILKAVVENYSQKRQPVGSKMLTYLPYLKFASATIRYDMVQLEKEGFLQKNHTSSGRVPSFKGYVYYLNHLLTRDHDVACMFESIDKVIQKKRFCKGQVIKEALNLLNNLTNYTTMAIGSDIFNNSKITKIDFIPLNSAQAVILIITDKGNVQHQNISLEQTKEISIYDLKDVVQVVNDLLKDKFLSEAAHIIQSDFFKKTIAKYICFQEQLIALFMEAFSSFASENLYFSGVSKMLEKPELNNPEIIKKFMGLLERKELLKIMLNQDSLSFKFSDGLQLTPLKDCMILSIPFDVNPNEKGRIAVVGPSWMKYPKVIPILEYLAVHLSKLNDQE.

The protein belongs to the HrcA family.

Its function is as follows. Negative regulator of class I heat shock genes (grpE-dnaK-dnaJ and groELS operons). Prevents heat-shock induction of these operons. The polypeptide is Heat-inducible transcription repressor HrcA (Aster yellows witches'-broom phytoplasma (strain AYWB)).